Here is a 227-residue protein sequence, read N- to C-terminus: Probable minor pilin MMP0600 (227 aa).

Residues 1–7 (MAKFSKG) constitute a propeptide that is removed on maturation. The QXSXEXXXL signature appears at 8 to 16 (QISIELILL).

Post-translationally, the N-terminus is probably cleaved by the prepilin peptidase EppA, which recognizes the class III signal sequence.

The protein resides in the secreted. It is found in the cell surface. The protein localises to the fimbrium. This is Probable minor pilin MMP0600 from Methanococcus maripaludis (strain DSM 14266 / JCM 13030 / NBRC 101832 / S2 / LL).